The primary structure comprises 94 residues: Small ribosomal subunit protein uS19 (94 aa).

This sequence belongs to the universal ribosomal protein uS19 family.

Protein S19 forms a complex with S13 that binds strongly to the 16S ribosomal RNA. The chain is Small ribosomal subunit protein uS19 from Elusimicrobium minutum (strain Pei191).